The following is a 438-amino-acid chain: Elongation factor 1-alpha (438 aa).

The region spanning 5–228 (KPHLNLVVIG…ALDSLEPPPK (224 aa)) is the tr-type G domain. The segment at 14-21 (GHVDHGKS) is G1. 14–21 (GHVDHGKS) lines the GTP pocket. Ser21 is a binding site for Mg(2+). Positions 70–74 (GVTIA) are G2. Residues 91-94 (DAPG) are G3. Residues 91–95 (DAPGH) and 153–156 (NKMD) each bind GTP. Residues 153-156 (NKMD) are G4. The G5 stretch occupies residues 194–196 (SAW).

This sequence belongs to the TRAFAC class translation factor GTPase superfamily. Classic translation factor GTPase family. EF-Tu/EF-1A subfamily.

The protein localises to the cytoplasm. It catalyses the reaction GTP + H2O = GDP + phosphate + H(+). Its function is as follows. GTP hydrolase that promotes the GTP-dependent binding of aminoacyl-tRNA to the A-site of ribosomes during protein biosynthesis. This Staphylothermus marinus (strain ATCC 43588 / DSM 3639 / JCM 9404 / F1) protein is Elongation factor 1-alpha.